Here is a 376-residue protein sequence, read N- to C-terminus: 23S rRNA (uracil(747)-C(5))-methyltransferase RlmC (376 aa).

Residues C3, C11, C14, and C88 each contribute to the [4Fe-4S] cluster site. S-adenosyl-L-methionine is bound by residues Q213, F242, E263, and N308. C335 serves as the catalytic Nucleophile.

Belongs to the class I-like SAM-binding methyltransferase superfamily. RNA M5U methyltransferase family. RlmC subfamily.

The enzyme catalyses uridine(747) in 23S rRNA + S-adenosyl-L-methionine = 5-methyluridine(747) in 23S rRNA + S-adenosyl-L-homocysteine + H(+). Catalyzes the formation of 5-methyl-uridine at position 747 (m5U747) in 23S rRNA. In Vibrio vulnificus (strain YJ016), this protein is 23S rRNA (uracil(747)-C(5))-methyltransferase RlmC.